Here is a 419-residue protein sequence, read N- to C-terminus: Peptide chain release factor subunit 1 (419 aa).

The protein belongs to the eukaryotic release factor 1 family. In terms of assembly, heterodimer of two subunits, one of which binds GTP.

The protein localises to the cytoplasm. In terms of biological role, directs the termination of nascent peptide synthesis (translation) in response to the termination codons UAA, UAG and UGA. In Methanococcus maripaludis (strain C6 / ATCC BAA-1332), this protein is Peptide chain release factor subunit 1.